The primary structure comprises 178 residues: Ribosome maturation factor RimP (178 aa).

This sequence belongs to the RimP family.

Its subcellular location is the cytoplasm. Required for maturation of 30S ribosomal subunits. The sequence is that of Ribosome maturation factor RimP from Streptococcus pyogenes serotype M1.